The sequence spans 869 residues: DNA mismatch repair protein MutS (869 aa).

Residue G624–S631 participates in ATP binding.

This sequence belongs to the DNA mismatch repair MutS family.

In terms of biological role, this protein is involved in the repair of mismatches in DNA. It is possible that it carries out the mismatch recognition step. This protein has a weak ATPase activity. This is DNA mismatch repair protein MutS from Solibacter usitatus (strain Ellin6076).